An 88-amino-acid polypeptide reads, in one-letter code: Putative membrane protein insertion efficiency factor (88 aa).

It belongs to the UPF0161 family.

It localises to the cell inner membrane. In terms of biological role, could be involved in insertion of integral membrane proteins into the membrane. This Coxiella burnetii (strain Dugway 5J108-111) protein is Putative membrane protein insertion efficiency factor.